The following is a 200-amino-acid chain: Holliday junction branch migration complex subunit RuvA (200 aa).

Residues 1–65 (MYEYIKGTLT…ETEHVLYGFS (65 aa)) form a domain I region. Residues 66–144 (SRAERECFRL…TLMPLYLEEP (79 aa)) are domain II. A flexible linker region spans residues 145–149 (VVPSS). Residues 150 to 200 (TANSSFKEGIGALMNLGFSRLAADRMMTEAVKELSEEASVAELLPIALRKS) are domain III.

The protein belongs to the RuvA family. Homotetramer. Forms an RuvA(8)-RuvB(12)-Holliday junction (HJ) complex. HJ DNA is sandwiched between 2 RuvA tetramers; dsDNA enters through RuvA and exits via RuvB. An RuvB hexamer assembles on each DNA strand where it exits the tetramer. Each RuvB hexamer is contacted by two RuvA subunits (via domain III) on 2 adjacent RuvB subunits; this complex drives branch migration. In the full resolvosome a probable DNA-RuvA(4)-RuvB(12)-RuvC(2) complex forms which resolves the HJ.

The protein resides in the cytoplasm. Its function is as follows. The RuvA-RuvB-RuvC complex processes Holliday junction (HJ) DNA during genetic recombination and DNA repair, while the RuvA-RuvB complex plays an important role in the rescue of blocked DNA replication forks via replication fork reversal (RFR). RuvA specifically binds to HJ cruciform DNA, conferring on it an open structure. The RuvB hexamer acts as an ATP-dependent pump, pulling dsDNA into and through the RuvAB complex. HJ branch migration allows RuvC to scan DNA until it finds its consensus sequence, where it cleaves and resolves the cruciform DNA. The chain is Holliday junction branch migration complex subunit RuvA from Chlamydia trachomatis serovar D (strain ATCC VR-885 / DSM 19411 / UW-3/Cx).